Reading from the N-terminus, the 234-residue chain is Probable chemoreceptor glutamine deamidase CheD (234 aa).

The protein belongs to the CheD family.

The enzyme catalyses L-glutaminyl-[protein] + H2O = L-glutamyl-[protein] + NH4(+). Functionally, probably deamidates glutamine residues to glutamate on methyl-accepting chemotaxis receptors (MCPs), playing an important role in chemotaxis. The sequence is that of Probable chemoreceptor glutamine deamidase CheD from Burkholderia pseudomallei (strain 1710b).